A 319-amino-acid polypeptide reads, in one-letter code: Serine/threonine-protein phosphatase PP1 isozyme 2 (319 aa).

Positions 61, 63, 89, and 121 each coordinate Mn(2+). His122 functions as the Proton donor in the catalytic mechanism. Mn(2+)-binding residues include His170 and His245.

The protein belongs to the PPP phosphatase family. PP-1 subfamily. It depends on Mn(2+) as a cofactor.

The catalysed reaction is O-phospho-L-seryl-[protein] + H2O = L-seryl-[protein] + phosphate. It catalyses the reaction O-phospho-L-threonyl-[protein] + H2O = L-threonyl-[protein] + phosphate. In Acetabularia peniculus (Green alga), this protein is Serine/threonine-protein phosphatase PP1 isozyme 2.